A 928-amino-acid chain; its full sequence is Probable outer membrane protein pmp10 (928 aa).

Positions 1-25 (MKSQFSWLVLSSTLACFTSCSTVFA) are cleaved as a signal peptide. The Autotransporter domain maps to 635 to 928 (TLCSDRGFWA…NVDLGGKFQF (294 aa)).

It belongs to the PMP outer membrane protein family.

It localises to the secreted. It is found in the cell wall. Its subcellular location is the cell outer membrane. In Chlamydia pneumoniae (Chlamydophila pneumoniae), this protein is Probable outer membrane protein pmp10 (pmp10).